Reading from the N-terminus, the 268-residue chain is Zinc finger protein SNAI2 (268 aa).

The tract at residues 1-20 is SNAG domain; sequence MPRSFLVKKHFNASKKPNYS. Positions 84-116 are disordered; the sequence is GRVSPLPSSDTSSKDHSGSESPISDEEERLQPK. C2H2-type zinc fingers lie at residues 128 to 150, 159 to 181, 185 to 207, and 213 to 235; these read FQCN…KQLH, FSCK…IRTH, CVCK…IRTH, and FSCP…LQTH. The C2H2-type 5; atypical zinc-finger motif lies at 241–264; the sequence is YQCKNCSKTFSRMSLLHKHEESGC.

It belongs to the snail C2H2-type zinc-finger protein family. In terms of assembly, interacts (via SNAG domain) with LIMD1 (via LIM domains), WTIP (via LIM domains) and AJUBA (via LIM domains). Interacts (via zinc fingers) with KPNA2, KPNB1 and TNPO1. May interact (via zinc fingers) with IPO7. In terms of processing, phosphorylated by GSK3B. Once phosphorylated, it becomes a target for ubiquitination. Ubiquitinated by the SCF(FBXO11) complex; ubiquitination requires previous GSK3B-mediated SNAI2 phosphorylation.

It localises to the nucleus. The protein resides in the cytoplasm. Transcriptional repressor that modulates both activator-dependent and basal transcription. Involved in the generation and migration of neural crest cells. Plays a role in mediating RAF1-induced transcriptional repression of the TJ protein, occludin (OCLN) and subsequent oncogenic transformation of epithelial cells. Represses BRCA2 expression by binding to its E2-box-containing silencer and recruiting CTBP1 and HDAC1 in breast cells. In epidermal keratinocytes, binds to the E-box in ITGA3 promoter and represses its transcription. Involved in the regulation of ITGB1 and ITGB4 expression and cell adhesion and proliferation in epidermal keratinocytes. Binds to E-box2 domain of BSG and activates its expression during TGFB1-induced epithelial-mesenchymal transition (EMT) in hepatocytes. Represses E-Cadherin/CDH1 transcription via E-box elements. Involved in osteoblast maturation. Binds to RUNX2 and SOC9 promoters and may act as a positive and negative transcription regulator, respectively, in osteoblasts. Binds to CXCL12 promoter via E-box regions in mesenchymal stem cells and osteoblasts. Plays an essential role in TWIST1-induced EMT and its ability to promote invasion and metastasis. In Rattus norvegicus (Rat), this protein is Zinc finger protein SNAI2 (Snai2).